We begin with the raw amino-acid sequence, 319 residues long: Ribonuclease Z (319 aa).

The Zn(2+) site is built by His-62, His-64, Asp-66, His-67, His-145, Asp-215, and His-273. Residue Asp-66 is the Proton acceptor of the active site.

This sequence belongs to the RNase Z family. In terms of assembly, homodimer. Zn(2+) serves as cofactor.

It carries out the reaction Endonucleolytic cleavage of RNA, removing extra 3' nucleotides from tRNA precursor, generating 3' termini of tRNAs. A 3'-hydroxy group is left at the tRNA terminus and a 5'-phosphoryl group is left at the trailer molecule.. Zinc phosphodiesterase, which displays some tRNA 3'-processing endonuclease activity. Probably involved in tRNA maturation, by removing a 3'-trailer from precursor tRNA. This Borreliella burgdorferi (strain ATCC 35210 / DSM 4680 / CIP 102532 / B31) (Borrelia burgdorferi) protein is Ribonuclease Z.